We begin with the raw amino-acid sequence, 465 residues long: Chromosomal replication initiator protein DnaA (465 aa).

The domain I, interacts with DnaA modulators stretch occupies residues 1 to 87 (MLWTDCLTRL…RPGSILSSSE (87 aa)). Residues 81 to 123 (SILSSSEQPATTTAALQTAPIPQPAKVKREPEPVANTAVSSKS) are disordered. Positions 88-100 (QPATTTAALQTAP) are enriched in low complexity. The domain II stretch occupies residues 88-127 (QPATTTAALQTAPIPQPAKVKREPEPVANTAVSSKSSKKK). A domain III, AAA+ region region spans residues 128–345 (LLNPQFTFSL…GALNKVVAIS (218 aa)). Residues glycine 173, glycine 175, lysine 176, and threonine 177 each coordinate ATP. The segment at 346–465 (RFKGAPIDLD…YKNLLRLLQS (120 aa)) is domain IV, binds dsDNA.

This sequence belongs to the DnaA family. In terms of assembly, oligomerizes as a right-handed, spiral filament on DNA at oriC.

Its subcellular location is the cytoplasm. Plays an essential role in the initiation and regulation of chromosomal replication. ATP-DnaA binds to the origin of replication (oriC) to initiate formation of the DNA replication initiation complex once per cell cycle. Binds the DnaA box (a 9 base pair repeat at the origin) and separates the double-stranded (ds)DNA. Forms a right-handed helical filament on oriC DNA; dsDNA binds to the exterior of the filament while single-stranded (ss)DNA is stabiized in the filament's interior. The ATP-DnaA-oriC complex binds and stabilizes one strand of the AT-rich DNA unwinding element (DUE), permitting loading of DNA polymerase. After initiation quickly degrades to an ADP-DnaA complex that is not apt for DNA replication. Binds acidic phospholipids. The protein is Chromosomal replication initiator protein DnaA of Acinetobacter baumannii (strain ATCC 17978 / DSM 105126 / CIP 53.77 / LMG 1025 / NCDC KC755 / 5377).